We begin with the raw amino-acid sequence, 150 residues long: Large ribosomal subunit protein bL9 (150 aa).

It belongs to the bacterial ribosomal protein bL9 family.

Binds to the 23S rRNA. In Paraburkholderia xenovorans (strain LB400), this protein is Large ribosomal subunit protein bL9.